The primary structure comprises 49 residues: Large ribosomal subunit protein bL33A (49 aa).

Belongs to the bacterial ribosomal protein bL33 family.

In Bacillus cytotoxicus (strain DSM 22905 / CIP 110041 / 391-98 / NVH 391-98), this protein is Large ribosomal subunit protein bL33A.